The primary structure comprises 121 residues: Large ribosomal subunit protein uL18 (121 aa).

It belongs to the universal ribosomal protein uL18 family. In terms of assembly, part of the 50S ribosomal subunit; part of the 5S rRNA/L5/L18/L25 subcomplex. Contacts the 5S and 23S rRNAs.

This is one of the proteins that bind and probably mediate the attachment of the 5S RNA into the large ribosomal subunit, where it forms part of the central protuberance. This chain is Large ribosomal subunit protein uL18, found in Delftia acidovorans (strain DSM 14801 / SPH-1).